The primary structure comprises 321 residues: tRNA U34 carboxymethyltransferase (321 aa).

Carboxy-S-adenosyl-L-methionine-binding positions include lysine 90, tryptophan 104, lysine 109, glycine 129, 151 to 153, 180 to 181, methionine 195, tyrosine 199, and arginine 314; these read DPT and IE.

The protein belongs to the class I-like SAM-binding methyltransferase superfamily. CmoB family. In terms of assembly, homotetramer.

It carries out the reaction carboxy-S-adenosyl-L-methionine + 5-hydroxyuridine(34) in tRNA = 5-carboxymethoxyuridine(34) in tRNA + S-adenosyl-L-homocysteine + H(+). Its function is as follows. Catalyzes carboxymethyl transfer from carboxy-S-adenosyl-L-methionine (Cx-SAM) to 5-hydroxyuridine (ho5U) to form 5-carboxymethoxyuridine (cmo5U) at position 34 in tRNAs. The protein is tRNA U34 carboxymethyltransferase of Mannheimia succiniciproducens (strain KCTC 0769BP / MBEL55E).